We begin with the raw amino-acid sequence, 569 residues long: BICD family-like cargo adapter 1 (569 aa).

The tract at residues M1–G36 is disordered. Residues A97–G101 carry the CC1 box motif. A coiled-coil region spans residues K102–H283. Residues A385–P405 are disordered. Positions N458–R520 form a coiled coil. Residues E533–R554 form a disordered region.

It belongs to the BICDR family. In terms of assembly, part of a tripartite complex with dynein and dynactin, acts an adapter linking the dynein motor complex and dynactin. As to expression, highly expressed in developing neural tissues and developing eye.

The protein localises to the cytoplasm. It is found in the cytoskeleton. The protein resides in the microtubule organizing center. Its subcellular location is the centrosome. In terms of biological role, acts as an adapter protein linking the dynein motor complex to various cargos and converts dynein from a non-processive to a highly processive motor in the presence of dynactin. Facilitates the interaction between dynein and dynactin and activates dynein processivity (the ability to move along a microtubule for a long distance without falling off the track). Predominantly recruits 2 dyneins, which increases both the force and speed of the microtubule motor. Component of secretory vesicle machinery in developing neurons that acts as a regulator of neurite outgrowth. Regulates the secretory vesicle transport by controlling the accumulation of Rab6-containing secretory vesicles in the pericentrosomal region restricting anterograde secretory transport during the early phase of neuronal differentiation, thereby inhibiting neuritogenesis. The polypeptide is BICD family-like cargo adapter 1 (bicdl1) (Danio rerio (Zebrafish)).